A 293-amino-acid polypeptide reads, in one-letter code: MATH domain and coiled-coil domain-containing protein At3g58400 (293 aa).

The region spanning 3 to 126 (RSRSQNLITE…NGELKIVAEI (124 aa)) is the MATH domain. Positions 227–285 (KLDWLENKLYEVAQKKEDDEAGETRLREMEEKLKDLKLKCSKMEALVEEEKAKVSAAKA) form a coiled coil.

This chain is MATH domain and coiled-coil domain-containing protein At3g58400, found in Arabidopsis thaliana (Mouse-ear cress).